The sequence spans 287 residues: Undecaprenyl-diphosphatase (287 aa).

The next 7 membrane-spanning stretches (helical) occupy residues 50–70 (PGVS…IAYF), 97–117 (LGFA…GIKF), 131–151 (IPSI…AEQV), 160–180 (VVLG…LLPG), 206–226 (FLLG…DALA), 234–254 (LPLL…IDWL), and 264–284 (WLFV…WGVY).

This sequence belongs to the UppP family.

The protein resides in the cell inner membrane. The catalysed reaction is di-trans,octa-cis-undecaprenyl diphosphate + H2O = di-trans,octa-cis-undecaprenyl phosphate + phosphate + H(+). Functionally, catalyzes the dephosphorylation of undecaprenyl diphosphate (UPP). Confers resistance to bacitracin. The polypeptide is Undecaprenyl-diphosphatase (Synechococcus sp. (strain CC9605)).